A 287-amino-acid chain; its full sequence is Efem/EfeO family lipoprotein (287 aa).

Positions 1–17 (MKKLPTILLASSLLLAA) are cleaved as a signal peptide. The N-palmitoyl cysteine moiety is linked to residue Cys18. Cys18 carries the S-diacylglycerol cysteine lipid modification. The segment at 20 to 50 (NNSHSDDNSNKDKQSQSSKGENKASLQKATK) is disordered. Over residues 23-33 (HSDDNSNKDKQ) the composition is skewed to basic and acidic residues.

This sequence belongs to the EfeM/EfeO family.

The protein localises to the cell membrane. This Staphylococcus haemolyticus (strain JCSC1435) protein is Efem/EfeO family lipoprotein.